A 345-amino-acid polypeptide reads, in one-letter code: MQRLVAWDPACLPLPPPPPAFKSMEVANFYYEADCLAAAYGGKAAPAAPPAARPGPRPPAGELGSIGDHERAIDFSPYLEPLGAPQAPAPATATDTFEAAPPAPAPAPASSGQHHDFLSDLFSDDYGGKNCKKPAEYGYVSLGRLGAAKGALHPGCFAPLHPPPPPPPPPAELKAEPGFEPADCKRKEEAGAPGGGAGMAAGFPYALRAYLGYQAVPSGSSGSLSTSSSSSPPGTPSPADAKAPPTACYAGAAPAPSQVKSKAKKTVDKHSDEYKIRRERNNIAVRKSRDKAKMRNLETQHKVLELTAENERLQKKVEQLSRELSTLRNLFKQLPEPLLASSGHC.

Residues 1–24 (MQRLVAWDPACLPLPPPPPAFKSM) are required for Lys-174 sumoylation. Arg-3 carries the asymmetric dimethylarginine; by CARM1 modification. Residues 24 to 135 (MEVANFYYEA…YGGKNCKKPA (112 aa)) are required for MYC transcriptional repression. Lys-43 is modified (N6-acetyllysine; alternate). Lys-43 carries the post-translational modification N6-methylated lysine; alternate. 2 disordered regions span residues 46–67 (PAAPPAARPGPRPPAGELGSIG) and 79–116 (LEPLGAPQAPAPATATDTFEAAPPAPAPAPASSGQHHD). The span at 47-59 (AAPPAARPGPRPP) shows a compositional bias: pro residues. The span at 84 to 100 (APQAPAPATATDTFEAA) shows a compositional bias: low complexity. Positions 116–124 (DFLSDLFSD) match the 9aaTAD motif. Lys-129 and Lys-132 each carry N6-acetyllysine; by KAT2A and KAT2B. Lys-133 carries the N6-acetyllysine; by KAT2A and KAT2B; alternate modification. A Glycyl lysine isopeptide (Lys-Gly) (interchain with G-Cter in SUMO2); alternate cross-link involves residue Lys-133. The segment at 157 to 178 (FAPLHPPPPPPPPPAELKAEPG) is disordered. A compositionally biased stretch (pro residues) spans 160–171 (LHPPPPPPPPPA). A Glycyl lysine isopeptide (Lys-Gly) (interchain with G-Cter in SUMO2); alternate cross-link involves residue Lys-174. A Glycyl lysine isopeptide (Lys-Gly) (interchain with G-Cter in SUMO); alternate cross-link involves residue Lys-174. Glycyl lysine isopeptide (Lys-Gly) (interchain with G-Cter in SUMO2) cross-links involve residues Lys-185 and Lys-187. The segment covering 218 to 232 (SGSSGSLSTSSSSSP) has biased composition (low complexity). The tract at residues 218 to 271 (SGSSGSLSTSSSSSPPGTPSPADAKAPPTACYAGAAPAPSQVKSKAKKTVDKHS) is disordered. The residue at position 226 (Thr-226) is a Phosphothreonine; by GSK3-beta. Residues Ser-227 and Ser-228 are each glycosylated (O-linked (GlcNAc) serine). The residue at position 231 (Ser-231) is a Phosphoserine; by GSK3-beta. At Thr-235 the chain carries Phosphothreonine; by RPS6KA1, CDK2 and MAPK. Glycyl lysine isopeptide (Lys-Gly) (interchain with G-Cter in SUMO2) cross-links involve residues Lys-260 and Lys-262. At Thr-266 the chain carries Phosphothreonine; by RPS6KA1 and PKC/PRKCA. A bZIP domain is found at 271-334 (SDEYKIRRER…STLRNLFKQL (64 aa)). Positions 275-295 (KIRRERNNIAVRKSRDKAKMR) are basic motif. A Phosphoserine; by PKC/PRKCA modification is found at Ser-288. Positions 297 to 304 (LETQHKVL) are leucine-zipper. Residue Ser-325 is modified to Phosphoserine; by CaMK2. Residue Lys-332 forms a Glycyl lysine isopeptide (Lys-Gly) (interchain with G-Cter in SUMO2) linkage.

It belongs to the bZIP family. C/EBP subfamily. In terms of assembly, binds DNA as a homodimer and as a heterodimer. Interacts with ATF4. Binds DNA as a heterodimer with ATF4. Interacts with MYB; within the complex, MYB and CEBPB bind to different promoter regions. Can form stable heterodimers with CEBPD. Can form stable heterodimers with CEBPA and CEBPE. Interacts with SIX1. Isoform 2 and isoform 3 also form heterodimers. Interacts with TRIM28 and PTGES2. Interacts with PRDM16. Interacts with CCDC85B. Forms a complex with THOC5. Interacts with ZNF638; this interaction increases transcriptional activation. Interacts with CIDEA and CIDEC; these interactions increase transcriptional activation of a subset of CEBPB downstream target genes. Interacts with DDIT3/CHOP. Interacts with EP300; recruits EP300 to chromatin. Interacts with RORA; the interaction disrupts interaction with EP300. Interacts (not methylated) with MED23, MED26, SMARCA2, SMARCB1 and SMARCC1. Interacts with KAT2A and KAT2B. Interacts with ATF5; EP300 is required for ATF5 and CEBPB interaction and DNA binding. Interacts with NFE2L1; the heterodimer represses expression of DSPP during odontoblast differentiation. Methylated. Methylation at Arg-3 by CARM1 and at Lys-43 by EHMT2 inhibit transactivation activity. Methylation is probably inhibited by phosphorylation at Thr-235. In terms of processing, sumoylated by polymeric chains of SUMO2 or SUMO3. Sumoylation at Lys-174 is required for inhibition of T-cells proliferation. In adipocytes, sumoylation at Lys-174 by PIAS1 leads to ubiquitination and subsequent proteasomal degradation. Desumoylated by SENP2, which abolishes ubiquitination and stabilizes protein levels. Post-translationally, ubiquitinated, leading to proteasomal degradation. Phosphorylated at Thr-235 by MAPK and CDK2, serves to prime phosphorylation at Thr-226 and Ser-231 by GSK3B and acquire DNA-binding as well as transactivation activities, required to induce adipogenesis. MAPK and CDK2 act sequentially to maintain Thr-235 in the primed phosphorylated state during mitotical cloning expansion and thereby progression of terminal differentiation. Phosphorylation at Thr-266 enhances transactivation activity. Phosphorylation at Ser-325 in response to calcium increases transactivation activity. Phosphorylated at Thr-235 by RPS6KA1. In terms of processing, O-glycosylated, glycosylation at Ser-227 and Ser-228 prevents phosphorylation on Thr-235, Ser-231 and Thr-226 and DNA binding activity which delays the adipocyte differentiation program. Post-translationally, acetylated. Acetylation at Lys-43 is an important and dynamic regulatory event that contributes to its ability to transactivate target genes, including those associated with adipogenesis and adipocyte function. Deacetylation by HDAC1 represses its transactivation activity. Acetylated by KAT2A and KAT2B within a cluster of lysine residues between amino acids 129-133, this acetylation is strongly induced by glucocorticoid treatment and enhances transactivation activity. In terms of tissue distribution, expressed at low levels in the lung, kidney and spleen.

Its subcellular location is the nucleus. It is found in the cytoplasm. Functionally, important transcription factor regulating the expression of genes involved in immune and inflammatory responses. Also plays a significant role in adipogenesis, as well as in the gluconeogenic pathway, liver regeneration, and hematopoiesis. The consensus recognition site is 5'-T[TG]NNGNAA[TG]-3'. Its functional capacity is governed by protein interactions and post-translational protein modifications. During early embryogenesis, plays essential and redundant roles with CEBPA. Has a promitotic effect on many cell types such as hepatocytes and adipocytes but has an antiproliferative effect on T-cells by repressing MYC expression, facilitating differentiation along the T-helper 2 lineage. Binds to regulatory regions of several acute-phase and cytokines genes and plays a role in the regulation of acute-phase reaction and inflammation. Also plays a role in intracellular bacteria killing. During adipogenesis, is rapidly expressed and, after activation by phosphorylation, induces CEBPA and PPARG, which turn on the series of adipocyte genes that give rise to the adipocyte phenotype. The delayed transactivation of the CEBPA and PPARG genes by CEBPB appears necessary to allow mitotic clonal expansion and thereby progression of terminal differentiation. Essential for female reproduction because of a critical role in ovarian follicle development. Restricts osteoclastogenesis: together with NFE2L1; represses expression of DSPP during odontoblast differentiation. Essential for gene expression induction in activated macrophages. Plays a major role in immune responses such as CD4(+) T-cell response, granuloma formation and endotoxin shock. Not essential for intracellular bacteria killing. In terms of biological role, acts as a dominant negative through heterodimerization with isoform 2. Promotes osteoblast differentiation and osteoclastogenesis. The polypeptide is CCAAT/enhancer-binding protein beta (Homo sapiens (Human)).